Here is a 200-residue protein sequence, read N- to C-terminus: Pyridoxine/pyridoxamine 5'-phosphate oxidase (200 aa).

FMN is bound by residues 49-54, 64-65, Arg-70, Lys-71, and Gln-93; these read RMLLLK and YT. Lys-54 provides a ligand contact to substrate. Residues Tyr-111, Arg-115, and Ser-119 each coordinate substrate. Residues 128-129 and Trp-173 each bind FMN; that span reads QS. 179-181 serves as a coordination point for substrate; that stretch reads RLH. FMN is bound at residue Arg-183.

The protein belongs to the pyridoxamine 5'-phosphate oxidase family. As to quaternary structure, homodimer. FMN serves as cofactor.

It carries out the reaction pyridoxamine 5'-phosphate + O2 + H2O = pyridoxal 5'-phosphate + H2O2 + NH4(+). The catalysed reaction is pyridoxine 5'-phosphate + O2 = pyridoxal 5'-phosphate + H2O2. It functions in the pathway cofactor metabolism; pyridoxal 5'-phosphate salvage; pyridoxal 5'-phosphate from pyridoxamine 5'-phosphate: step 1/1. Its pathway is cofactor metabolism; pyridoxal 5'-phosphate salvage; pyridoxal 5'-phosphate from pyridoxine 5'-phosphate: step 1/1. Catalyzes the oxidation of either pyridoxine 5'-phosphate (PNP) or pyridoxamine 5'-phosphate (PMP) into pyridoxal 5'-phosphate (PLP). The polypeptide is Pyridoxine/pyridoxamine 5'-phosphate oxidase (Gluconobacter oxydans (strain 621H) (Gluconobacter suboxydans)).